Reading from the N-terminus, the 113-residue chain is Mini zinc finger protein 2 (113 aa).

A ZF-HD dimerization-type; degenerate zinc finger spans residues 24-83 (YGECRRNHAASTGGHAVDGCREFIAAEDGGGGNSTSAVGVAAAALKCAACGCHRSFHRRV). The disordered stretch occupies residues 93–113 (DCASGDTSSSSPSSSSSLSSE). Residues 100 to 113 (SSSSPSSSSSLSSE) show a composition bias toward low complexity.

As to quaternary structure, homo- and heterodimers.

It localises to the cytoplasm. Its function is as follows. Inhibits zinc finger homeodomain (ZHD) transcription factors, by interacting with them to prevent both their nuclear localization and their DNA-binding properties. The polypeptide is Mini zinc finger protein 2 (MIF3) (Oryza sativa subsp. japonica (Rice)).